The sequence spans 390 residues: Leu/Ile/Val-binding protein homolog 6 (390 aa).

The first 21 residues, 1-21, serve as a signal peptide directing secretion; it reads MKKIALTALAVFSLAASAAYA.

Belongs to the leucine-binding protein family.

Functionally, component of an amino-acid transport system. The chain is Leu/Ile/Val-binding protein homolog 6 from Brucella melitensis biotype 1 (strain ATCC 23456 / CCUG 17765 / NCTC 10094 / 16M).